A 487-amino-acid polypeptide reads, in one-letter code: Probable Xaa-Pro aminopeptidase CPSG_02684 (487 aa).

Residues M1–S10 are compositionally biased toward polar residues. The interval M1–S22 is disordered. Mn(2+) is bound by residues D275, D286, E421, and E460.

It belongs to the peptidase M24B family. Mn(2+) serves as cofactor.

The enzyme catalyses Release of any N-terminal amino acid, including proline, that is linked to proline, even from a dipeptide or tripeptide.. Catalyzes the removal of a penultimate prolyl residue from the N-termini of peptides. The protein is Probable Xaa-Pro aminopeptidase CPSG_02684 of Coccidioides posadasii (strain RMSCC 757 / Silveira) (Valley fever fungus).